Reading from the N-terminus, the 97-residue chain is Ferredoxin-thioredoxin reductase, variable chain (97 aa).

Belongs to the ferredoxin thioredoxin reductase alpha subunit family. In terms of assembly, heterodimer of subunit A (variable subunit) and subunit B (catalytic subunit). Heterodimeric FTR forms a complex with ferredoxin and thioredoxin.

It localises to the plastid. The protein resides in the chloroplast. Its function is as follows. Variable subunit of the ferredoxin-thioredoxin reductase (FTR), which catalyzes the two-electron reduction of thioredoxins by the electrons provided by reduced ferredoxin. The protein is Ferredoxin-thioredoxin reductase, variable chain of Zea mays (Maize).